The following is a 173-amino-acid chain: Bacterial deubiquitinase-like protein BilC (173 aa).

Zn(2+)-binding residues include His103, His105, and Asp115.

This sequence belongs to the M67B family. Zn(2+) serves as cofactor.

In terms of biological role, component of the Bil (bacterial ISG15-like) antiviral defense system, composed of BilA, BilB, BilC and BilD. The Bil system specifically conjugates a ubiquitin-like moiety (bilA) to the bacteriophage central tail fiber (CTF, or tip attachment protein J) via reactions involving E1 (bilD) and E2 (bilB). Modifies CTF of phage SECphi27 and SECphi4, which probably interferes with assembly of the phage tail. Also modifies T5 baseplate hub protein pb3 (gene D16), but not gp27 of phage T6 (Bil defends against T6). BilC is a probable metalloprotease that may cleave non-specifically conjugated targets. Bil-encoding bacteria produce mostly defective phage SECphi27, many of which have phage assembly defects, including no tails. SECphi27 phage progeny produced in E.coli with the Bil system inject less DNA into naive host cells, maybe because the phage are less able to adsorb and inject their DNA into host cells. Expression of the Bil system in E.coli (strain MG1655) confers about 100-fold resistance to phage SECphi27, SECphi18, SECphi6, SECphi4 and T5, but not to SECphi17. When cells expressing the Bil system are infected by phage SECphi27 at low multiplicity of infection (0.03 MOI) the culture survives, at 3.0 MOI the culture collapses at the same time as cells without the Bil system. Its function is as follows. Cleaves a ubiquitin-GFP (Ubl-GFP) fusion protein in vivo. In Collimonas sp. (strain OK412), this protein is Bacterial deubiquitinase-like protein BilC.